The chain runs to 174 residues: UPF0398 protein YfdB (174 aa).

This sequence belongs to the UPF0398 family.

In Lactococcus lactis subsp. lactis (strain IL1403) (Streptococcus lactis), this protein is UPF0398 protein YfdB (yfdB).